We begin with the raw amino-acid sequence, 253 residues long: MSEVSMRDLLKAGVHFGHQTRFWNPKMRKYIFGARNKIHIINLEHTVPALNDALRFVSNLAEKKNKILFVGTKRAAGKIIKEEADRANMPYVNHRWLGGMLTNYKTIRQSIRRYRDLETQSQDGTFDKLTKKEVLMLNREMDKLERSIGGIKDMGGLPDALFVIDVDHERIAIKEANKLGIPVIGVVDTNSDPDGVDYVIPGNDDAIRAIQVYAKAVADSCLHGLSSAAGNGDEFVEVNEAAASAEEAAEKSE.

Belongs to the universal ribosomal protein uS2 family.

The protein is Small ribosomal subunit protein uS2 of Hahella chejuensis (strain KCTC 2396).